A 402-amino-acid polypeptide reads, in one-letter code: Deoxyguanosinetriphosphate triphosphohydrolase-like protein (402 aa).

A disordered region spans residues 20–39; that stretch reads PAFSRGRLVPEPESPTRTPF. Residues 73–217 enclose the HD domain; that stretch reads RLTHTIEVAQ…AAIADDIAYN (145 aa).

Belongs to the dGTPase family. Type 2 subfamily.

The sequence is that of Deoxyguanosinetriphosphate triphosphohydrolase-like protein from Brucella ovis (strain ATCC 25840 / 63/290 / NCTC 10512).